The chain runs to 263 residues: Protein M1425_2021 (263 aa).

The protein belongs to the CinA family.

This Saccharolobus islandicus (strain M.14.25 / Kamchatka #1) (Sulfolobus islandicus) protein is Protein M1425_2021.